Here is a 45-residue protein sequence, read N- to C-terminus: Large ribosomal subunit protein bL34 (45 aa).

The protein belongs to the bacterial ribosomal protein bL34 family.

This is Large ribosomal subunit protein bL34 from Paenarthrobacter aurescens (strain TC1).